We begin with the raw amino-acid sequence, 542 residues long: Putative leucine aminopeptidase 1 (542 aa).

Positions 294 and 299 each coordinate Mn(2+). Lys-323 is a catalytic residue. Mn(2+) is bound by residues Asp-336, Asp-396, and Glu-398. The active site involves Arg-400.

This sequence belongs to the peptidase M17 family. In terms of assembly, homohexamer (dimer of homotrimers). Requires Mn(2+) as cofactor.

The protein localises to the cytoplasm. It carries out the reaction Release of an N-terminal amino acid, Xaa-|-Yaa-, in which Xaa is preferably Leu, but may be other amino acids including Pro although not Arg or Lys, and Yaa may be Pro. Amino acid amides and methyl esters are also readily hydrolyzed, but rates on arylamides are exceedingly low.. The enzyme catalyses Release of N-terminal proline from a peptide.. Its function is as follows. Presumably involved in the processing and regular turnover of intracellular proteins. Catalyzes the removal of unsubstituted N-terminal amino acids from various peptides. In Oryza sativa subsp. japonica (Rice), this protein is Putative leucine aminopeptidase 1.